We begin with the raw amino-acid sequence, 830 residues long: Probable glucan 1,3-beta-glucosidase D (830 aa).

The span at 1–34 shows a compositional bias: basic and acidic residues; the sequence is MPSQSRSRDRYRGRDTEYTRRRYPDEHDYSHDDH. Positions 1 to 279 are disordered; the sequence is MPSQSRSRDR…PPMDARWPKG (279 aa). The Cytoplasmic segment spans residues 1–301; sequence MPSQSRSRDR…GRPFWKQKKW (301 aa). The segment covering 35-51 has biased composition (acidic residues); the sequence is DYDYDDDDDDNDDLEQD. Composition is skewed to basic and acidic residues over residues 52-98 and 110-175; these read VTER…ERRR and QHRE…KHQS. The segment covering 181–194 has biased composition (low complexity); the sequence is SASHLLSADALARL. 3 stretches are compositionally biased toward basic and acidic residues: residues 198–215, 228–243, and 253–264; these read YEKEDRRERAHAKDAAKA, EQERGLRAEKPRDRSR, and EEGRGPEMEFRR. Residues 302–322 form a helical; Signal-anchor for type II membrane protein membrane-spanning segment; that stretch reads LIGIGVVILILVIVIPVAVVV. The Extracellular portion of the chain corresponds to 323-830; the sequence is SKKHNDKPNA…PDFGSLPEYY (508 aa). The tract at residues 327–351 is disordered; it reads NDKPNATTTQPDGTTPSNSNLDGLS. A compositionally biased stretch (polar residues) spans 330–348; it reads PNATTTQPDGTTPSNSNLD. N-linked (GlcNAc...) asparagine glycosylation is found at Asn-331, Asn-376, Asn-381, Asn-393, Asn-546, and Asn-558. The active-site Proton donor is Glu-597. N-linked (GlcNAc...) asparagine glycosylation is found at Asn-610, Asn-636, Asn-669, and Asn-689. Glu-701 serves as the catalytic Nucleophile.

This sequence belongs to the glycosyl hydrolase 5 (cellulase A) family.

The protein localises to the cell membrane. It catalyses the reaction Successive hydrolysis of beta-D-glucose units from the non-reducing ends of (1-&gt;3)-beta-D-glucans, releasing alpha-glucose.. Its function is as follows. Glucosidase involved in the degradation of cellulosic biomass. Active on lichenan. The sequence is that of Probable glucan 1,3-beta-glucosidase D (exgD) from Aspergillus clavatus (strain ATCC 1007 / CBS 513.65 / DSM 816 / NCTC 3887 / NRRL 1 / QM 1276 / 107).